Consider the following 260-residue polypeptide: ATP synthase subunit a (260 aa).

The next 6 helical transmembrane spans lie at 37-57 (FTNA…FMTL), 95-115 (FFPF…IGMF), 125-145 (IVVT…TGFV), 154-174 (VFVP…IEII), 191-211 (MLAG…FMTM), and 233-253 (EFLV…MYLH).

It belongs to the ATPase A chain family. As to quaternary structure, F-type ATPases have 2 components, CF(1) - the catalytic core - and CF(0) - the membrane proton channel. CF(1) has five subunits: alpha(3), beta(3), gamma(1), delta(1), epsilon(1). CF(0) has three main subunits: a(1), b(2) and c(9-12). The alpha and beta chains form an alternating ring which encloses part of the gamma chain. CF(1) is attached to CF(0) by a central stalk formed by the gamma and epsilon chains, while a peripheral stalk is formed by the delta and b chains.

It localises to the cell inner membrane. Functionally, key component of the proton channel; it plays a direct role in the translocation of protons across the membrane. The protein is ATP synthase subunit a of Parvibaculum lavamentivorans (strain DS-1 / DSM 13023 / NCIMB 13966).